The following is a 319-amino-acid chain: L-lactate dehydrogenase (319 aa).

NAD(+)-binding positions include valine 17, aspartate 38, lysine 43, tyrosine 69, and 83–84 (GA). Residues glutamine 86, arginine 92, and 124–127 (NPVD) contribute to the substrate site. NAD(+) contacts are provided by residues 122–124 (ATN) and serine 147. A substrate-binding site is contributed by 152–155 (DTAR). Beta-D-fructose 1,6-bisphosphate contacts are provided by arginine 157 and histidine 172. Histidine 179 serves as the catalytic Proton acceptor. Tyrosine 224 is modified (phosphotyrosine). Threonine 233 serves as a coordination point for substrate.

Belongs to the LDH/MDH superfamily. LDH family. Homotetramer.

Its subcellular location is the cytoplasm. It catalyses the reaction (S)-lactate + NAD(+) = pyruvate + NADH + H(+). It functions in the pathway fermentation; pyruvate fermentation to lactate; (S)-lactate from pyruvate: step 1/1. With respect to regulation, allosterically activated by fructose 1,6-bisphosphate (FBP). In terms of biological role, catalyzes the conversion of lactate to pyruvate. The sequence is that of L-lactate dehydrogenase from Bacillus licheniformis (strain ATCC 14580 / DSM 13 / JCM 2505 / CCUG 7422 / NBRC 12200 / NCIMB 9375 / NCTC 10341 / NRRL NRS-1264 / Gibson 46).